The sequence spans 238 residues: Uridylate kinase (238 aa).

12-15 (KLSG) provides a ligand contact to ATP. Glycine 54 lines the UMP pocket. Glycine 55 and arginine 59 together coordinate ATP. Residues aspartate 74 and 135–142 (TGNPYFTT) contribute to the UMP site. Residues threonine 162, asparagine 163, tyrosine 168, and aspartate 171 each contribute to the ATP site.

The protein belongs to the UMP kinase family. Homohexamer.

It is found in the cytoplasm. The enzyme catalyses UMP + ATP = UDP + ADP. It functions in the pathway pyrimidine metabolism; CTP biosynthesis via de novo pathway; UDP from UMP (UMPK route): step 1/1. With respect to regulation, inhibited by UTP. Catalyzes the reversible phosphorylation of UMP to UDP. This Bradyrhizobium sp. (strain ORS 278) protein is Uridylate kinase.